Consider the following 130-residue polypeptide: Small ribosomal subunit protein uS8 (130 aa).

This sequence belongs to the universal ribosomal protein uS8 family. As to quaternary structure, part of the 30S ribosomal subunit. Contacts proteins S5 and S12.

Functionally, one of the primary rRNA binding proteins, it binds directly to 16S rRNA central domain where it helps coordinate assembly of the platform of the 30S subunit. This is Small ribosomal subunit protein uS8 from Shewanella denitrificans (strain OS217 / ATCC BAA-1090 / DSM 15013).